The chain runs to 176 residues: NAD(P)H-quinone oxidoreductase subunit 6, chloroplastic (176 aa).

Transmembrane regions (helical) follow at residues 10–30 (FLLVFLGLGLILGGLGVVLLT), 32–52 (PIFSAFSLGLVLVCISLFYIL), 61–81 (AQLLIYVGAINVLILFAVMFM), 95–115 (VGNGLTSLICTSLFVLLITII), and 152–172 (FFLPFEFISIILLVALIGAIA).

The protein belongs to the complex I subunit 6 family. NDH is composed of at least 16 different subunits, 5 of which are encoded in the nucleus.

The protein resides in the plastid. It localises to the chloroplast thylakoid membrane. The catalysed reaction is a plastoquinone + NADH + (n+1) H(+)(in) = a plastoquinol + NAD(+) + n H(+)(out). It catalyses the reaction a plastoquinone + NADPH + (n+1) H(+)(in) = a plastoquinol + NADP(+) + n H(+)(out). In terms of biological role, NDH shuttles electrons from NAD(P)H:plastoquinone, via FMN and iron-sulfur (Fe-S) centers, to quinones in the photosynthetic chain and possibly in a chloroplast respiratory chain. The immediate electron acceptor for the enzyme in this species is believed to be plastoquinone. Couples the redox reaction to proton translocation, and thus conserves the redox energy in a proton gradient. In Populus alba (White poplar), this protein is NAD(P)H-quinone oxidoreductase subunit 6, chloroplastic (ndhG).